Reading from the N-terminus, the 280-residue chain is MTKLGFTRSGGSKSGRTRRRLRRRLSGGVLLLIALTIAGGLAAVLTPTPQVAVADESSSALLRTGKQLFDTSCVSCHGANLQGVPDHGPSLIGVGEAAVYFQVSTGRMPAMRGEAQAPRKDPIFDEAQIDAIGAYVQANGGGPTVVRNPDGSIATQSLRGNDLGRGGDLFRLNCASCHNFTGKGGALSSGKYAPDLAPANEQQILTAMLTGPQNMPKFSNRQLSFEAKKDIIAYVKVATEARQPGGYLLGGFGPAPEGMAMWIIGMVAAIGLALWIGARS.

The helical transmembrane segment at 25–45 (LSGGVLLLIALTIAGGLAAVL) threads the bilayer. 2 consecutive Cytochrome c domains span residues 60-140 (ALLR…QANG) and 161-239 (NDLG…KVAT). The heme c site is built by Cys-73, Cys-76, His-77, Cys-174, Cys-177, and His-178. A helical membrane pass occupies residues 258–278 (GMAMWIIGMVAAIGLALWIGA).

As to quaternary structure, the cytochrome bc1 complex is composed of a cytochrome b (QcrB), the Rieske iron-sulfur protein (QcrA) and a diheme cytochrome c (QcrC) subunit. In terms of processing, binds 2 heme c groups covalently per subunit.

The protein resides in the cell membrane. The catalysed reaction is a quinol + 2 Fe(III)-[cytochrome c](out) = a quinone + 2 Fe(II)-[cytochrome c](out) + 2 H(+)(out). Its function is as follows. Cytochrome b subunit of the cytochrome bc1 complex, an essential component of the respiratory electron transport chain required for ATP synthesis. The bc1 complex catalyzes the oxidation of ubiquinol and the reduction of cytochrome c in the respiratory chain. The bc1 complex operates through a Q-cycle mechanism that couples electron transfer to generation of the proton gradient that drives ATP synthesis. The chain is Cytochrome bc1 complex cytochrome c subunit (qcrC) from Mycobacterium bovis (strain ATCC BAA-935 / AF2122/97).